The sequence spans 289 residues: Mitochondrial fission regulator 1-like (289 aa).

Threonine 27 carries the phosphothreonine modification. A Phosphoserine modification is found at serine 38. Serine 100 bears the Phosphoserine; by AMPK mark. Residues serine 107, serine 221, and serine 222 each carry the phosphoserine modification. At serine 235 the chain carries Phosphoserine; by AMPK. Serine 258 and serine 270 each carry phosphoserine.

It belongs to the MTFR1 family. Post-translationally, phosphorylated by AMPK. Upon stress, phosphorylation at Ser-100 and Ser-235 by AMPK is sufficient to induce mitochondrial fragmentation.

It is found in the mitochondrion outer membrane. Mitochondrial protein required for adaptation of miochondrial dynamics to metabolic changes. Regulates mitochondrial morphology at steady state and mediates AMPK-dependent stress-induced mitochondrial fragmentation via the control of OPA1 levels. This Mus musculus (Mouse) protein is Mitochondrial fission regulator 1-like (Mtfr1l).